Consider the following 300-residue polypeptide: Putative lysophosphatidic acid:oleoyl-CoA acyltransferase (300 aa).

The helical transmembrane segment at 32-52 threads the bilayer; it reads WILIVVVMILRVPLCIISVTL. The short motif at 115-120 is the HXXXXD motif element; the sequence is HSSPLD.

It belongs to the 1-acyl-sn-glycerol-3-phosphate acyltransferase family.

It is found in the lipid droplet. It localises to the endoplasmic reticulum membrane. Its subcellular location is the golgi apparatus membrane. The enzyme catalyses a 1-acyl-sn-glycero-3-phosphate + an acyl-CoA = a 1,2-diacyl-sn-glycero-3-phosphate + CoA. Its function is as follows. Acyl-CoA-dependent lysophosphatidic acid acyltransferase with preference for oleoyl-CoA. Involved in triacylglyceride homeostasis and lipid droplet formation. Involved in vacuolar protein sorting. The protein is Putative lysophosphatidic acid:oleoyl-CoA acyltransferase (vps66) of Schizosaccharomyces pombe (strain 972 / ATCC 24843) (Fission yeast).